The chain runs to 1222 residues: Deubiquitinating protein VCPIP1 (1222 aa).

Positions 1–21 (MSQPPPPPPPLPPPPPPPEAP) are enriched in pro residues. Positions 1 to 36 (MSQPPPPPPPLPPPPPPPEAPQTPSSLASAAASGGL) are disordered. The segment covering 25–36 (SSLASAAASGGL) has biased composition (low complexity). One can recognise an OTU domain in the interval 208–361 (LIPVHVDGDG…RNHYIPLVGI (154 aa)). Asp216 is a catalytic residue. The active-site Nucleophile is the Cys219. Residue His354 is part of the active site. At Lys408 the chain carries N6-acetyllysine. 3 disordered regions span residues 725–776 (SVMQ…KEKK), 989–1009 (EATT…LGSG), and 1024–1074 (AFQG…VFTA). Ser747 and Ser757 each carry phosphoserine. The segment covering 755–771 (PSSAPATPTKAPYSPTT) has biased composition (low complexity). Thr763 carries the phosphothreonine modification. Ser768, Ser994, and Ser998 each carry phosphoserine. Over residues 1041-1050 (LDPRARETSV) the composition is skewed to basic and acidic residues. Polar residues predominate over residues 1057–1074 (GTDFSNSSTKTEPSVFTA). Position 1077 is a phosphoserine (Ser1077). Disordered stretches follow at residues 1113–1175 (VSSI…TETT) and 1188–1222 (ATRS…MDHS). A compositionally biased stretch (polar residues) spans 1143-1157 (VVSSSAKSGSLQTGL). The segment covering 1163–1175 (LTGGTENLNTETT) has biased composition (low complexity). Ser1198 bears the Phosphoserine mark. Residues 1200–1209 (EELEEMDSQD) are compositionally biased toward acidic residues. The residue at position 1207 (Ser1207) is a Phosphoserine; by ATM. The span at 1210–1222 (AEMTNTTEPMDHS) shows a compositional bias: polar residues.

Binds VCP and the ternary complex containing STX5A, NSFL1C and VCP. In terms of processing, phosphorylated at Ser-1207 by ATM or ATR following induction of covalent DNA-protein cross-links (DPCs).

The protein resides in the nucleus. It is found in the cytoplasm. It localises to the endoplasmic reticulum. The protein localises to the golgi apparatus. Its subcellular location is the golgi stack. It catalyses the reaction Thiol-dependent hydrolysis of ester, thioester, amide, peptide and isopeptide bonds formed by the C-terminal Gly of ubiquitin (a 76-residue protein attached to proteins as an intracellular targeting signal).. In terms of biological role, deubiquitinating enzyme involved in DNA repair and reassembly of the Golgi apparatus and the endoplasmic reticulum following mitosis. Necessary for VCP-mediated reassembly of Golgi stacks after mitosis. Plays a role in VCP-mediated formation of transitional endoplasmic reticulum (tER). Mediates dissociation of the ternary complex containing STX5A, NSFL1C and VCP. Also involved in DNA repair following phosphorylation by ATM or ATR: acts by catalyzing deubiquitination of SPRTN, thereby promoting SPRTN recruitment to chromatin and subsequent proteolytic cleavage of covalent DNA-protein cross-links (DPCs). Hydrolyzes 'Lys-11'- and 'Lys-48'-linked polyubiquitin chains. Its function is as follows. (Microbial infection) Regulates the duration of C.botulinum neurotoxin type A (BoNT/A) intoxication by catalyzing deubiquitination of Botulinum neurotoxin A light chain (LC), thereby preventing LC degradation by the proteasome, and accelerating botulinum neurotoxin intoxication in patients. This Homo sapiens (Human) protein is Deubiquitinating protein VCPIP1.